A 51-amino-acid chain; its full sequence is MSHNMKGQKKRLAKAHKQNTRVPVWVIVKTNRKVVSHPRRRHWRRRSLDVK.

Belongs to the eukaryotic ribosomal protein eL39 family.

This Methanosarcina acetivorans (strain ATCC 35395 / DSM 2834 / JCM 12185 / C2A) protein is Large ribosomal subunit protein eL39.